The primary structure comprises 195 residues: dITP/XTP pyrophosphatase (195 aa).

Substrate is bound at residue 7–12 (SSNKGK). Mg(2+) is bound by residues E38 and D68. D68 serves as the catalytic Proton acceptor. Substrate contacts are provided by residues S69, 150-153 (FGYD), K173, and 178-179 (HR).

It belongs to the HAM1 NTPase family. Homodimer. Mg(2+) is required as a cofactor.

It carries out the reaction XTP + H2O = XMP + diphosphate + H(+). The enzyme catalyses dITP + H2O = dIMP + diphosphate + H(+). The catalysed reaction is ITP + H2O = IMP + diphosphate + H(+). Pyrophosphatase that catalyzes the hydrolysis of nucleoside triphosphates to their monophosphate derivatives, with a high preference for the non-canonical purine nucleotides XTP (xanthosine triphosphate), dITP (deoxyinosine triphosphate) and ITP. Seems to function as a house-cleaning enzyme that removes non-canonical purine nucleotides from the nucleotide pool, thus preventing their incorporation into DNA/RNA and avoiding chromosomal lesions. The polypeptide is dITP/XTP pyrophosphatase (Nautilia profundicola (strain ATCC BAA-1463 / DSM 18972 / AmH)).